The chain runs to 348 residues: NADH-ubiquinone oxidoreductase chain 2 (348 aa).

11 helical membrane passes run 1-21, 25-45, 60-80, 99-119, 124-144, 151-171, 178-197, 202-224, 239-259, 274-294, and 326-346; these read MNPY…TLTF, HWIL…PLMA, FLIQ…NAWI, MFAL…PEVL, LLTG…LIIQ, PLIL…SGLN, ILAY…IQYA, LIAL…VLSA, ILAA…PLTG, DLPA…FFYL, and LTIS…ILML.

This sequence belongs to the complex I subunit 2 family. Core subunit of respiratory chain NADH dehydrogenase (Complex I) which is composed of 45 different subunits.

It is found in the mitochondrion inner membrane. The catalysed reaction is a ubiquinone + NADH + 5 H(+)(in) = a ubiquinol + NAD(+) + 4 H(+)(out). Functionally, core subunit of the mitochondrial membrane respiratory chain NADH dehydrogenase (Complex I) which catalyzes electron transfer from NADH through the respiratory chain, using ubiquinone as an electron acceptor. Essential for the catalytic activity and assembly of complex I. The sequence is that of NADH-ubiquinone oxidoreductase chain 2 (mt-nd2) from Danio rerio (Zebrafish).